A 130-amino-acid chain; its full sequence is MQFRKGRPKILRLISEEPKFNIFKPVGIPKNELESVVLTLEELESLRLVDYVGQSHEDAADSMGISRRVFWNILKSARKKVSDALINGKMIDIGGGYYQIRKCNEQECQGMPCRFGLSNCFKNKNKDNEL.

The protein belongs to the UPF0251 family.

In Methanococcus vannielii (strain ATCC 35089 / DSM 1224 / JCM 13029 / OCM 148 / SB), this protein is UPF0251 protein Mevan_1492.